We begin with the raw amino-acid sequence, 313 residues long: Protein FixB (313 aa).

255 to 283 is an FAD binding site; that stretch reads LYLAVGISGQIQHMVGANASQTIFAINKD.

The protein belongs to the ETF alpha-subunit/FixB family. As to quaternary structure, heterodimer of FixA and FixB.

Its pathway is amine and polyamine metabolism; carnitine metabolism. Its function is as follows. Required for anaerobic carnitine reduction. May bring reductant to CaiA. This chain is Protein FixB, found in Escherichia coli (strain K12 / MC4100 / BW2952).